A 55-amino-acid chain; its full sequence is Ribosome modulation factor (55 aa).

The protein belongs to the ribosome modulation factor family. In terms of assembly, associates exclusively with 100S ribosomes.

The protein resides in the cytoplasm. During stationary phase, converts 70S ribosomes to an inactive dimeric form (100S ribosomes). May form immature 90S particles, which are converted to mature 100S ribosomes by the hibernation promoting factor Hpf. This is Ribosome modulation factor from Escherichia coli O157:H7.